A 350-amino-acid chain; its full sequence is Methionine import ATP-binding protein MetN (350 aa).

An ABC transporter domain is found at 2-242; sequence IELKGISQHF…PRHDVTRALI (241 aa). An ATP-binding site is contributed by 39–46; the sequence is GRSGAGKS.

Belongs to the ABC transporter superfamily. Methionine importer (TC 3.A.1.24) family. The complex is composed of two ATP-binding proteins (MetN), two transmembrane proteins (MetI) and a solute-binding protein (MetQ).

The protein localises to the cell inner membrane. It carries out the reaction L-methionine(out) + ATP + H2O = L-methionine(in) + ADP + phosphate + H(+). It catalyses the reaction D-methionine(out) + ATP + H2O = D-methionine(in) + ADP + phosphate + H(+). Its function is as follows. Part of the ABC transporter complex MetNIQ involved in methionine import. Responsible for energy coupling to the transport system. In Ralstonia nicotianae (strain ATCC BAA-1114 / GMI1000) (Ralstonia solanacearum), this protein is Methionine import ATP-binding protein MetN.